Consider the following 419-residue polypeptide: Metacaspase-1B (419 aa).

The segment at 1 to 109 is disordered; the sequence is MYHPNYNYPP…PPMEAQQFGK (109 aa). The segment covering 33-50 has biased composition (pro residues); that stretch reads SPPPPQPYYSNGYPPPSQ. Residues 51-66 show a composition bias toward low complexity; it reads SPHSYSPPQYPPHGQY. Over residues 82–93 the composition is skewed to polar residues; sequence QYRSYHSHSPSW. Residues His210 and Cys266 contribute to the active site.

This sequence belongs to the peptidase C14B family.

Its function is as follows. Involved in cell death (apoptosis). The sequence is that of Metacaspase-1B (casB) from Aspergillus oryzae (strain ATCC 42149 / RIB 40) (Yellow koji mold).